Consider the following 423-residue polypeptide: MNLKEKLFPENRLGLNRFWNFSRGGIDNFRTGLRDAVSGVEQTRSRMMEYDQLLVWAILSLMLIGLVMVYSASITLADGPKYANYSSNFFLIRHMISLAIAIGVGIWAFKIPTKVWDRYSPVIFGITVLLLIAVLIPGVGRGVNGAKRWIPLGLMNFQSSELMKFAAVIFAASYTVQRQEYLHSFVKGMLPMGIAVALVGGLLMAEPDMGAFVVVALIAFGILFLGGINAKLFGGLIAVGLMSGATMIAFSPLRRGRMLAFMDPWQVDNAANKGYQLTHSLMAFGRGEWFGTGLGGSVEKLHYLPEAHTDFIMAVIGEELGFVGVVVMIFLFYWIVRRAFLIGRTALQLDRSFAGLAAKGVAIWIGWQAFINMGVNLGLLPTKGLTLPLVSYGGSGILMNAVAMAMLLRIDFENRILMRGGKL.

Over 1–53 (MNLKEKLFPENRLGLNRFWNFSRGGIDNFRTGLRDAVSGVEQTRSRMMEYDQL) the chain is Cytoplasmic. Residues 54-74 (LVWAILSLMLIGLVMVYSASI) traverse the membrane as a helical segment. The Periplasmic portion of the chain corresponds to 75 to 88 (TLADGPKYANYSSN). Residues 89–109 (FFLIRHMISLAIAIGVGIWAF) form a helical membrane-spanning segment. Over 110-119 (KIPTKVWDRY) the chain is Cytoplasmic. A helical membrane pass occupies residues 120-140 (SPVIFGITVLLLIAVLIPGVG). Topologically, residues 141–149 (RGVNGAKRW) are periplasmic. Residues 150 to 170 (IPLGLMNFQSSELMKFAAVIF) traverse the membrane as a helical segment. Over 171-184 (AASYTVQRQEYLHS) the chain is Cytoplasmic. Residues 185 to 205 (FVKGMLPMGIAVALVGGLLMA) traverse the membrane as a helical segment. The Periplasmic portion of the chain corresponds to 206 to 208 (EPD). A helical membrane pass occupies residues 209–229 (MGAFVVVALIAFGILFLGGIN). The Cytoplasmic portion of the chain corresponds to 230 to 231 (AK). Residues 232–252 (LFGGLIAVGLMSGATMIAFSP) traverse the membrane as a helical segment. Over 253-310 (LRRGRMLAFMDPWQVDNAANKGYQLTHSLMAFGRGEWFGTGLGGSVEKLHYLPEAHTD) the chain is Periplasmic. The chain crosses the membrane as a helical span at residues 311–331 (FIMAVIGEELGFVGVVVMIFL). Residues 332–359 (FYWIVRRAFLIGRTALQLDRSFAGLAAK) lie on the Cytoplasmic side of the membrane. A helical membrane pass occupies residues 360 to 380 (GVAIWIGWQAFINMGVNLGLL). The Periplasmic segment spans residues 381 to 386 (PTKGLT). Residues 387–407 (LPLVSYGGSGILMNAVAMAML) form a helical membrane-spanning segment. Residues 408–423 (LRIDFENRILMRGGKL) are Cytoplasmic-facing.

This sequence belongs to the SEDS family. FtsW subfamily.

The protein resides in the cell inner membrane. The enzyme catalyses [GlcNAc-(1-&gt;4)-Mur2Ac(oyl-L-Ala-gamma-D-Glu-L-Lys-D-Ala-D-Ala)](n)-di-trans,octa-cis-undecaprenyl diphosphate + beta-D-GlcNAc-(1-&gt;4)-Mur2Ac(oyl-L-Ala-gamma-D-Glu-L-Lys-D-Ala-D-Ala)-di-trans,octa-cis-undecaprenyl diphosphate = [GlcNAc-(1-&gt;4)-Mur2Ac(oyl-L-Ala-gamma-D-Glu-L-Lys-D-Ala-D-Ala)](n+1)-di-trans,octa-cis-undecaprenyl diphosphate + di-trans,octa-cis-undecaprenyl diphosphate + H(+). It participates in cell wall biogenesis; peptidoglycan biosynthesis. In terms of biological role, peptidoglycan polymerase that is essential for cell division. The protein is Probable peptidoglycan glycosyltransferase FtsW of Polynucleobacter necessarius subsp. necessarius (strain STIR1).